The chain runs to 78 residues: Large ribosomal subunit protein bL28 (78 aa).

The protein belongs to the bacterial ribosomal protein bL28 family.

This is Large ribosomal subunit protein bL28 from Ruthia magnifica subsp. Calyptogena magnifica.